The chain runs to 586 residues: Arginine--tRNA ligase (586 aa).

The short motif at 133–143 (ANPTGPLNIVS) is the 'HIGH' region element.

It belongs to the class-I aminoacyl-tRNA synthetase family. As to quaternary structure, monomer.

The protein resides in the cytoplasm. The enzyme catalyses tRNA(Arg) + L-arginine + ATP = L-arginyl-tRNA(Arg) + AMP + diphosphate. The sequence is that of Arginine--tRNA ligase from Leptospira borgpetersenii serovar Hardjo-bovis (strain JB197).